The following is a 333-amino-acid chain: 4-hydroxy-3-methylbut-2-enyl diphosphate reductase (333 aa).

Residue Cys20 participates in [4Fe-4S] cluster binding. 2 residues coordinate (2E)-4-hydroxy-3-methylbut-2-enyl diphosphate: His49 and His82. Dimethylallyl diphosphate contacts are provided by His49 and His82. Positions 49 and 82 each coordinate isopentenyl diphosphate. Residue Cys104 coordinates [4Fe-4S] cluster. His132 contributes to the (2E)-4-hydroxy-3-methylbut-2-enyl diphosphate binding site. His132 contacts dimethylallyl diphosphate. His132 contributes to the isopentenyl diphosphate binding site. Residue Glu134 is the Proton donor of the active site. A (2E)-4-hydroxy-3-methylbut-2-enyl diphosphate-binding site is contributed by Thr172. Cys202 contacts [4Fe-4S] cluster. Residues Ser230, Ser231, Asn232, and Ser274 each contribute to the (2E)-4-hydroxy-3-methylbut-2-enyl diphosphate site. Dimethylallyl diphosphate is bound by residues Ser230, Ser231, Asn232, and Ser274. Positions 230, 231, 232, and 274 each coordinate isopentenyl diphosphate.

This sequence belongs to the IspH family. Requires [4Fe-4S] cluster as cofactor.

It carries out the reaction isopentenyl diphosphate + 2 oxidized [2Fe-2S]-[ferredoxin] + H2O = (2E)-4-hydroxy-3-methylbut-2-enyl diphosphate + 2 reduced [2Fe-2S]-[ferredoxin] + 2 H(+). The catalysed reaction is dimethylallyl diphosphate + 2 oxidized [2Fe-2S]-[ferredoxin] + H2O = (2E)-4-hydroxy-3-methylbut-2-enyl diphosphate + 2 reduced [2Fe-2S]-[ferredoxin] + 2 H(+). It functions in the pathway isoprenoid biosynthesis; dimethylallyl diphosphate biosynthesis; dimethylallyl diphosphate from (2E)-4-hydroxy-3-methylbutenyl diphosphate: step 1/1. The protein operates within isoprenoid biosynthesis; isopentenyl diphosphate biosynthesis via DXP pathway; isopentenyl diphosphate from 1-deoxy-D-xylulose 5-phosphate: step 6/6. Catalyzes the conversion of 1-hydroxy-2-methyl-2-(E)-butenyl 4-diphosphate (HMBPP) into a mixture of isopentenyl diphosphate (IPP) and dimethylallyl diphosphate (DMAPP). Acts in the terminal step of the DOXP/MEP pathway for isoprenoid precursor biosynthesis. The protein is 4-hydroxy-3-methylbut-2-enyl diphosphate reductase of Polaromonas sp. (strain JS666 / ATCC BAA-500).